A 166-amino-acid polypeptide reads, in one-letter code: Probable glucosamine 6-phosphate N-acetyltransferase 2 (166 aa).

Residues 21–166 (VQIRRLEATD…EKGVQMAIYF (146 aa)) form the N-acetyltransferase domain. Substrate is bound by residues Ser43, 93 to 96 (KFLR), and 105 to 107 (EDV). 115–120 (GRGLGL) provides a ligand contact to acetyl-CoA. 136 to 137 (YK) provides a ligand contact to substrate. Residue 150-152 (YAK) coordinates acetyl-CoA.

Belongs to the acetyltransferase family. GNA1 subfamily. Homodimer.

Its subcellular location is the endoplasmic reticulum membrane. The enzyme catalyses D-glucosamine 6-phosphate + acetyl-CoA = N-acetyl-D-glucosamine 6-phosphate + CoA + H(+). It participates in nucleotide-sugar biosynthesis; UDP-N-acetyl-alpha-D-glucosamine biosynthesis; N-acetyl-alpha-D-glucosamine 1-phosphate from alpha-D-glucosamine 6-phosphate (route I): step 1/2. Its function is as follows. Acetyltransferase involved in UDP-N-acetylglucosamine (UDP-GlcNAc) biosynthesis. UDP-GlcNAc is an essential metabolite that serves as an initial sugar donor of N-glycan synthesis and thus plays an important role in protein and lipid glycosylation. The polypeptide is Probable glucosamine 6-phosphate N-acetyltransferase 2 (Oryza sativa subsp. japonica (Rice)).